Consider the following 128-residue polypeptide: Small ribosomal subunit protein eS8 (128 aa).

The protein belongs to the eukaryotic ribosomal protein eS8 family. In terms of assembly, part of the 30S ribosomal subunit.

The protein is Small ribosomal subunit protein eS8 of Metallosphaera sedula (strain ATCC 51363 / DSM 5348 / JCM 9185 / NBRC 15509 / TH2).